A 236-amino-acid polypeptide reads, in one-letter code: Syntaxin-8 (236 aa).

The Cytoplasmic portion of the chain corresponds to 1 to 215; that stretch reads MAPDPWFSTY…LVDRKSTSCG (215 aa). A coiled-coil region spans residues 42 to 65; the sequence is VTIRALLQKLKEKIALLKDLLLRA. Residues 145-207 enclose the t-SNARE coiled-coil homology domain; it reads QKIIQEQDAG…RTETRRVNLV (63 aa). S160 carries the phosphoserine modification. Residues 216-232 traverse the membrane as a helical; Anchor for type IV membrane protein segment; that stretch reads MIMVILLLLVAIVVVAV. The Vesicular portion of the chain corresponds to 233–236; it reads WPTK.

This sequence belongs to the syntaxin family. As to quaternary structure, forms a SNARE complex with STX7, VTI1B and VAMP8 which functions in the homotypic fusion of late endosomes. Part of the SNARE core complex containing STX7, VAMP8 and VTI1B. Interacts with VAMP8. Interacts with HECTD3. Interacts with TPC1. Ubiquitinated by HECTD3.

The protein localises to the membrane. Vesicle trafficking protein that functions in the early secretory pathway, possibly by mediating retrograde transport from cis-Golgi membranes to the ER. In Bos taurus (Bovine), this protein is Syntaxin-8 (STX8).